The sequence spans 498 residues: MRRAPSLVLFFLVALCGRGNCRVANAEEKLMDDLLNKTRYNNLIRPATSSSQLISIKLQLSLAQLISVNEREQIMTTNVWLKQEWTDYRLTWNSSRYEGVNILRIPAKRIWLPDIVLYNNADGTYEVSVYTNLIVRSNGSVLWLPPAIYKSACKIEVKYFPFDQQNCTLKFRSWTYDHTEIDMVLMTPTASMDDFTPSGEWDIVALPGRRTVNPQDPSYVDVTYDFIIKRKPLFYTINLIIPCVLTTLLAILVFYLPSDCGEKMTLCISVLLALTFFLLLISKIVPPTSLDVPLIGKYLMFTMVLVTFSIVTSVCVLNVHHRSPSTHTMAPWVKRCFLHKLPTFLFMKRPGPDSSPARAFPPSKSCVTKPEATATSTSPSNFYGNSMYFVNPASAASKSPAGSTPVAIPRDFWLRSSGRFRQDVQEALEGVSFIAQHMKNDDEDQSVVEDWKYVAMVVDRLFLWVFMFVCVLGTVGLFLPPLFQTHAASEGPYAAQRD.

Residues Met-1 to Cys-21 form the signal peptide. Residues Arg-22–Leu-239 are Extracellular-facing. N-linked (GlcNAc...) asparagine glycans are attached at residues Asn-36, Asn-93, Asn-138, and Asn-166. A disulfide bond links Cys-153 and Cys-167. Residues Ile-240–Tyr-255 form a helical membrane-spanning segment. Residues Leu-256–Gly-261 are Cytoplasmic-facing. Residue Glu-262 coordinates Na(+). The chain crosses the membrane as a helical span at residues Glu-262 to Phe-277. Residues Leu-278–Gly-296 lie on the Extracellular side of the membrane. The chain crosses the membrane as a helical span at residues Lys-297–His-321. The Cytoplasmic segment spans residues Arg-322–Val-454. A disordered region spans residues Ala-357 to Thr-377. A helical transmembrane segment spans residues Ala-455–Phe-478. The Extracellular segment spans residues Leu-479 to Asp-498.

Belongs to the ligand-gated ion channel (TC 1.A.9) family. Acetylcholine receptor (TC 1.A.9.1) subfamily. Beta-4/CHRNB4 sub-subfamily. As to quaternary structure, neuronal AChR is composed of two different types of subunits: alpha and beta. CHRNB4/Beta-4 subunit can be combined to CHRNA2/alpha-2, CHRNA3/alpha-3 or CHRNA4/alpha-4, CHRNA5/alpha-5 and CHRNB3/beta-3 to give rise to functional receptors. Forms stoichiometries such as (CHRNA3)2:(CHRNB4)3 or (CHRNA3:CHRNB4)2:CHRNB3. Interacts with RIC3; which is required for proper folding and assembly. Interacts with LYPD6.

Its subcellular location is the synaptic cell membrane. The protein localises to the cell membrane. It catalyses the reaction Ca(2+)(in) = Ca(2+)(out). It carries out the reaction K(+)(in) = K(+)(out). The catalysed reaction is Na(+)(in) = Na(+)(out). Its activity is regulated as follows. Activated by a myriad of ligands such as acetylcholine, cytisine, nicotine, choline and epibatidine. The heteropentamer CHRNA3:CHRNB4 activity is blocked by the alpha-conotoxin ImI and AuIB. In terms of biological role, component of neuronal acetylcholine receptors (nAChRs) that function as pentameric, ligand-gated cation channels with high calcium permeability among other activities. nAChRs are excitatory neurotrasnmitter receptors formed by a collection of nAChR subunits known to mediate synaptic transmission in the nervous system and the neuromuscular junction. Each nAchR subunit confers differential attributes to channel properties, including activation, deactivation and desensitization kinetics, pH sensitivity, cation permeability, and binding to allosteric modulators. CHRNB4 forms heteropentameric neuronal acetylcholine receptors with CHRNA2, CHRNA3 and CHRNA4, as well as CHRNA5 and CHRNB3 as accesory subunits. CHRNA3:CHRNB4 being predominant in neurons of the autonomic ganglia, it is known as ganglionic nicotinic receptor. CHRNA3:CHRNB4 or CHRNA3:CHRNA5:CHRNB4 play also an important role in the habenulo-interpeduncular tract, modulating the mesolimbic dopamine system and affecting reward circuits and addiction. Hypothalamic CHRNA3:CHRNB4 nAChR activation by nicotine leads to activation of POMC neurons and a decrease in food intake. This Homo sapiens (Human) protein is Neuronal acetylcholine receptor subunit beta-4.